Here is a 209-residue protein sequence, read N- to C-terminus: Mitotic spindle checkpoint protein MAD2 (209 aa).

One can recognise an HORMA domain in the interval H15 to V198.

This sequence belongs to the MAD2 family. As to quaternary structure, part of the mitotic checkpoint complex (MCC); interacts with MAD1, CDC20-1, CDC20-2 and CDC20-5. Interacts with BUBR1 at chromocenters and with BUB3.1. Interacts with EIF4B3. Expressed in actively dividing tissues, early in organ development, in young leaves, lateral root primordia and root meristems.

It is found in the nucleus. The protein localises to the nucleus envelope. The protein resides in the chromosome. Its subcellular location is the centromere. It localises to the kinetochore. It is found in the cytoplasm. The protein localises to the cytoskeleton. The protein resides in the spindle. Its function is as follows. Required for the execution of the mitotic checkpoint which monitors the process of kinetochore-spindle attachment and delays the onset of anaphase when this process is not complete. It inhibits the activity of the anaphase promoting complex by sequestering CDC20 until all chromosomes are aligned at the metaphase plate. This is Mitotic spindle checkpoint protein MAD2 from Arabidopsis thaliana (Mouse-ear cress).